The chain runs to 336 residues: Transmembrane protein 19 (336 aa).

6 helical membrane passes run 15–35, 49–69, 84–104, 218–238, 257–277, and 313–333; these read MITN…FWII, ISPW…SNGL, VVGF…LMFF, VTVV…IAYF, IIAF…YLGA, and VNLF…WGFW.

The protein belongs to the TMEM19 family.

Its subcellular location is the membrane. This Homo sapiens (Human) protein is Transmembrane protein 19 (TMEM19).